We begin with the raw amino-acid sequence, 95 residues long: MKDPRDIIKRPIITENTMNLIGQKKYTFEVDVKANKTEVKDAVEKIFGVKVEKVNIMNYKGKFKRVGRYSGYTNRRKKAIVTLTPDSKEIELFEV.

Belongs to the universal ribosomal protein uL23 family. As to quaternary structure, contacts protein L29, and trigger factor when it is bound to the ribosome. Part of the 50S ribosomal subunit.

Functionally, one of the early assembly proteins it binds 23S rRNA. One of the proteins that surrounds the polypeptide exit tunnel on the outside of the ribosome. Forms the main docking site for trigger factor binding to the ribosome. The sequence is that of Large ribosomal subunit protein uL23 from Geobacillus stearothermophilus (Bacillus stearothermophilus).